The primary structure comprises 393 residues: SEC12-like protein 2 (393 aa).

Position 2 is an N-acetylalanine (A2). At 2–367 (ANQSTETNQP…EQKGDKPGVR (366 aa)) the chain is on the cytoplasmic side. The interval 41-67 (EKSEDDDESSSSSSSSRSCIVLSGGGG) is disordered. Residue S43 is modified to Phosphoserine. WD repeat units follow at residues 151-190 (RDVG…TLLN), 193-231 (QAHS…AVAS), 283-322 (IKKN…TIQV), and 326-367 (AHLG…PGVR). The helical; Signal-anchor for type II membrane protein transmembrane segment at 368 to 388 (WWLLVLLIVLLYVVAYYYMKA) threads the bilayer. The Lumenal segment spans residues 389–393 (KGIIP).

As to quaternary structure, interacts with BZIP28.

The protein resides in the endoplasmic reticulum membrane. The protein localises to the golgi apparatus. Its subcellular location is the cis-Golgi network membrane. Required for the formation or budding of transport vesicles from the ER. The sequence is that of SEC12-like protein 2 (STL2P) from Arabidopsis thaliana (Mouse-ear cress).